The chain runs to 418 residues: Glutamyl-tRNA reductase (418 aa).

Residues 49 to 52, Ser109, 114 to 116, and Gln120 contribute to the substrate site; these read TCNR and EPQ. Cys50 serves as the catalytic Nucleophile. 189–194 contributes to the NADP(+) binding site; it reads GAGETI.

This sequence belongs to the glutamyl-tRNA reductase family. Homodimer.

The enzyme catalyses (S)-4-amino-5-oxopentanoate + tRNA(Glu) + NADP(+) = L-glutamyl-tRNA(Glu) + NADPH + H(+). It functions in the pathway porphyrin-containing compound metabolism; protoporphyrin-IX biosynthesis; 5-aminolevulinate from L-glutamyl-tRNA(Glu): step 1/2. In terms of biological role, catalyzes the NADPH-dependent reduction of glutamyl-tRNA(Glu) to glutamate 1-semialdehyde (GSA). The sequence is that of Glutamyl-tRNA reductase from Escherichia coli O9:H4 (strain HS).